Consider the following 255-residue polypeptide: 5-oxoprolinase subunit A (255 aa).

The protein belongs to the LamB/PxpA family. Forms a complex composed of PxpA, PxpB and PxpC.

The catalysed reaction is 5-oxo-L-proline + ATP + 2 H2O = L-glutamate + ADP + phosphate + H(+). Functionally, catalyzes the cleavage of 5-oxoproline to form L-glutamate coupled to the hydrolysis of ATP to ADP and inorganic phosphate. This is 5-oxoprolinase subunit A from Clostridium beijerinckii (strain ATCC 51743 / NCIMB 8052) (Clostridium acetobutylicum).